Here is a 247-residue protein sequence, read N- to C-terminus: uncharacterized protein (247 aa).

The protein belongs to the AIM2 family.

It localises to the cytoplasm. It is found in the nucleus. This is an uncharacterized protein from Schizosaccharomyces pombe (strain 972 / ATCC 24843) (Fission yeast).